The chain runs to 543 residues: Type I restriction enzyme MpnII methylase subunit (543 aa).

S-adenosyl-L-methionine contacts are provided by residues 208-213 (EFFTPQ), 240-242 (SGS), and Glu265.

Belongs to the N(4)/N(6)-methyltransferase family. As to quaternary structure, the methyltransferase is composed of M and S polypeptides.

It catalyses the reaction a 2'-deoxyadenosine in DNA + S-adenosyl-L-methionine = an N(6)-methyl-2'-deoxyadenosine in DNA + S-adenosyl-L-homocysteine + H(+). Functionally, the subtype gamma methyltransferase (M) subunit of a type I restriction enzyme. The M and S subunits together form a methyltransferase (MTase) that probably methylates A-2 on the top strand and A-3 on the bottom strand of the sequence 5'-GAN(7)TAY-3'. As the bacterial DNA is methylated on this sequence and this is the only type I methylase in the genome, it is probably responsible for all of the methylation on this site in the genome. The R subunit has multiple frameshifts and is probably not expressed in this bacteria. The sequence is that of Type I restriction enzyme MpnII methylase subunit from Mycoplasma pneumoniae (strain ATCC 29342 / M129 / Subtype 1) (Mycoplasmoides pneumoniae).